Reading from the N-terminus, the 351-residue chain is Muscleblind-like protein 2a (351 aa).

4 consecutive C3H1-type zinc fingers follow at residues 13–41, 47–73, 177–205, and 213–239; these read WLTLEVCRQFQRGTCSRSDEECKFAHPPK, NGRVIACFDSLKGRCTRENCKYLHPPA, TDKLEVCREFQRGNCARGETDCRFAHPSD, and DNTVTVCMDYIKSRCSREKCKYFHPPA.

The protein belongs to the muscleblind family. Expressed in fast and slow myotomal muscle, heart, liver, skin, brain and testis.

The protein localises to the nucleus. It localises to the cytoplasm. In terms of biological role, involved in pre-mRNA alternative splicing regulation. RNA-binding protein that binds to 5'ACACCC-3' core sequence. The sequence is that of Muscleblind-like protein 2a (mbnl2a) from Takifugu rubripes (Japanese pufferfish).